The primary structure comprises 122 residues: MIQMQSILEVADNSGAKKVMCIKVLGGSHHMVAKLGDVIVISVKEAIPGGKVKKGDVYKGVIVRTKTGVVRPDGSTIKFDKNALVLLNKQDEPIGTRVFGPVTRELRAKKYVRIMSLAEEVL.

It belongs to the universal ribosomal protein uL14 family. As to quaternary structure, part of the 50S ribosomal subunit. Forms a cluster with proteins L3 and L19. In the 70S ribosome, L14 and L19 interact and together make contacts with the 16S rRNA in bridges B5 and B8.

In terms of biological role, binds to 23S rRNA. Forms part of two intersubunit bridges in the 70S ribosome. The sequence is that of Large ribosomal subunit protein uL14 from Rickettsia canadensis (strain McKiel).